A 479-amino-acid polypeptide reads, in one-letter code: MATAIPKITDQFHSAQDIGWYGSSYLLTNSCLTISFGKLYTLYPVKWIYLVALALFEIGSLVCGFTPNSVGLIIGRAITGLGSAGLFSGAITVISQSMPLQRRLLCISVIMCLFGVADVAGPLIGGVFTDYLTWRWCFYINLPFGGLTALAIVFLLEAQQPVKQAGGIKCLLSHLDLVGLLFLFPAVICLLLVLSWGGADYPWDDRRIIGLIVGFTALILVFIVVQWWKQDKATVPPRLIKKRDIWGTSIFSFCITGAMMAFTYHLPIWFQSVKGVSATKSGLMSIPTILGMTICSLLSAVLVGKIGFYTPFMYAAPVLSVIGAGLLSTLKVDSGPAQWIGYQIPFGIGLGIGLSQPMVVVQAVLEPDDIPLAIAITAFMESLGGSVAISVAQSVFRSQLVKNMALEAPQANAHGNITTAMTTLRDTVPPEMLSGVLRAYNLAITQALYVGVALSSLAIVGALPIRWTSVNEKKTEGCP.

Helical transmembrane passes span 47 to 67, 71 to 91, 104 to 124, 136 to 156, 177 to 197, 208 to 228, 250 to 270, 283 to 303, 306 to 326, 344 to 364, and 372 to 392; these read WIYL…GFTP, GLII…SGAI, LLCI…GPLI, WCFY…VFLL, LVGL…LSWG, IIGL…VQWW, IFSF…PIWF, LMSI…AVLV, IGFY…GAGL, IPFG…VQAV, and LAIA…ISVA. N416 carries N-linked (GlcNAc...) asparagine glycosylation. The chain crosses the membrane as a helical span at residues 442-462; it reads LAITQALYVGVALSSLAIVGA.

The protein belongs to the major facilitator superfamily. TCR/Tet family.

The protein localises to the cell membrane. Functionally, MFS-type transporter; part of the lnb gene cluster that mediates the biosynthesis of diastereomeric piperazines. Lna and lnb clusters encode sets of enzymes that produce overlapping sets of previously undescribed metabolites such as piperazinomycin-like metabolites or morpholine. The lna and lnb biosynthetic pathways appear to be part of a signaling network that controls the formation of sclerotia, a resilient overwintering structure. May be involved in the secretion of the metabolites produced by the lna and lnb clusters. This is MFS-type transporter lnaF from Aspergillus flavus (strain ATCC 200026 / FGSC A1120 / IAM 13836 / NRRL 3357 / JCM 12722 / SRRC 167).